We begin with the raw amino-acid sequence, 380 residues long: MFYALGPLALFAFATEVMATPVAYPMTTASPTLAKRDSCTFSGSDGAASASRSQTDCATITLSDITVPSGTTLDLSDLEDDTTVIFEGTTSWEYEEWDGPLLQIKGNGITIKGADGAKLNPDGSRWWDGEGSNGGVTKPKFFYAHDLTDSTIQNLYIENTPVQAVSINGCDGLTITDMTIDNSAGDDAGGHNTDGFDIGESSNVVITGAKVYNQDDCVAVNSGTSITFSGGTCSGGHGLSIGSVGGRDDNTVDTVTFKDSTVSNSVNGIRIKAKSGETGEIKGVTYSGISLESISDYGILIEQNYDGGDLDGEVTSGIPITDLTIENISGSGAVDSDGYNIVIVCGDDACSNWTWSDVEVTGGEDYGSCENVPSVASCST.

Residues 1–19 (MFYALGPLALFAFATEVMA) form the signal peptide. Residues 20 to 35 (TPVAYPMTTASPTLAK) constitute a propeptide that is removed on maturation. C39 and C57 are joined by a disulfide. 7 PbH1 repeats span residues 147–169 (LTDS…SING), 170–200 (CDGL…DIGE), 201–222 (SSNV…AVNS), 223–243 (GTSI…SIGS), 252–273 (VDTV…RIKA), 281–303 (IKGV…LIEQ), and 315–338 (TSGI…DSDG). The active-site Proton donor is D215. Cysteines 217 and 233 form a disulfide. H237 is an active-site residue. An N-linked (GlcNAc...) asparagine glycan is attached at N327. C345 and C350 are disulfide-bonded. An N-linked (GlcNAc...) asparagine glycan is attached at N352. C369 and C378 are oxidised to a cystine.

It belongs to the glycosyl hydrolase 28 family.

It is found in the secreted. The catalysed reaction is (1,4-alpha-D-galacturonosyl)n+m + H2O = (1,4-alpha-D-galacturonosyl)n + (1,4-alpha-D-galacturonosyl)m.. Functionally, involved in maceration and soft-rotting of plant tissue. Hydrolyzes the 1,4-alpha glycosidic bonds of de-esterified pectate in the smooth region of the plant cell wall. This Emericella nidulans (strain FGSC A4 / ATCC 38163 / CBS 112.46 / NRRL 194 / M139) (Aspergillus nidulans) protein is Endopolygalacturonase AN8327.